An 828-amino-acid polypeptide reads, in one-letter code: DNA gyrase subunit A (828 aa).

Positions Leu32–Leu497 constitute a Topo IIA-type catalytic domain. The active-site O-(5'-phospho-DNA)-tyrosine intermediate is Tyr120. The short motif at Gln524–Gly530 is the GyrA-box element.

The protein belongs to the type II topoisomerase GyrA/ParC subunit family. In terms of assembly, heterotetramer, composed of two GyrA and two GyrB chains. In the heterotetramer, GyrA contains the active site tyrosine that forms a transient covalent intermediate with DNA, while GyrB binds cofactors and catalyzes ATP hydrolysis.

It is found in the cytoplasm. It carries out the reaction ATP-dependent breakage, passage and rejoining of double-stranded DNA.. Functionally, a type II topoisomerase that negatively supercoils closed circular double-stranded (ds) DNA in an ATP-dependent manner to modulate DNA topology and maintain chromosomes in an underwound state. Negative supercoiling favors strand separation, and DNA replication, transcription, recombination and repair, all of which involve strand separation. Also able to catalyze the interconversion of other topological isomers of dsDNA rings, including catenanes and knotted rings. Type II topoisomerases break and join 2 DNA strands simultaneously in an ATP-dependent manner. The protein is DNA gyrase subunit A of Streptococcus pyogenes serotype M3 (strain ATCC BAA-595 / MGAS315).